The primary structure comprises 506 residues: MNSEFSVGLSNTISSLFKDDEDYQIVQASELLTYLSNKGFYPPLVIQNIMIDILESERSNDPAVVYNIIKVLNSLKDEGYRIELENWDLIISVFISLNIHLSRPNSSSPPTTTTTTTTTGERAGKKLKTESSPTLSSSSLATSSRGVNTVSDSVAKIPFLSSKVLATYFISIYESMNMVTSSFTDSHPLHRLFKVGNRAHILFSEVMSIIDNCDHDTLREMSKFVTLIYRGGKSWEDSILPSISQGFRNIKRCYRRALFCQLMPFGDEKTKLLKGMLEYFYPTGSGNEFVGFNKRKRGGTKELIEELTPWFKKISTKAIKHCSKTPSSDDQFYDSYNYHDNQNDDNDTNYLNLESPIGEIEVFVIMICQLFQSTIISSTKQYGLKLKNQVQNKQQQQQQKLTSIIKDEDKNEKENKSENEEKEKEKEKEKEKEKEKEKEKEKENEEGEEDNGDQLPYQVPWQTVYEQFKEFSKTILTTCEKICKNRTLIESNLNGVETILKFKSTP.

Disordered stretches follow at residues 104-144 (PNSS…ATSS) and 397-456 (QQQK…DQLP). Low complexity predominate over residues 130–144 (ESSPTLSSSSLATSS). The segment covering 405–443 (IKDEDKNEKENKSENEEKEKEKEKEKEKEKEKEKEKEKE) has biased composition (basic and acidic residues). Positions 405-455 (IKDEDKNEKENKSENEEKEKEKEKEKEKEKEKEKEKEKENEEGEEDNGDQL) form a coiled coil.

This is an uncharacterized protein from Dictyostelium discoideum (Social amoeba).